The following is a 311-amino-acid chain: NAD kinase (311 aa).

Asp-88 functions as the Proton acceptor in the catalytic mechanism. NAD(+) contacts are provided by residues 88–89, 162–163, Arg-190, Asp-192, Val-200, and 203–208; these read DG, NE, and TAHNLS.

Belongs to the NAD kinase family. A divalent metal cation is required as a cofactor.

The protein resides in the cytoplasm. It catalyses the reaction NAD(+) + ATP = ADP + NADP(+) + H(+). Involved in the regulation of the intracellular balance of NAD and NADP, and is a key enzyme in the biosynthesis of NADP. Catalyzes specifically the phosphorylation on 2'-hydroxyl of the adenosine moiety of NAD to yield NADP. The sequence is that of NAD kinase from Rhodopirellula baltica (strain DSM 10527 / NCIMB 13988 / SH1).